We begin with the raw amino-acid sequence, 1288 residues long: CLIP-associating protein 2 (1288 aa).

Positions 1–62 (MALSLSQDRS…AAKSGASKEG (62 aa)) are disordered. Low complexity-rich tracts occupy residues 19 to 32 (GSRPSSAQAAFKVP) and 40 to 62 (ESASSSRRPSATGAAKSGASKEG). Residues 62-312 (GAGAVDEEDF…RTLQSCLKSS (251 aa)) form a TOG 1 region. HEAT repeat units follow at residues 174–209 (HGAEGIVPVLFNLIPNCAKVMATSGTAAIRIIIRHT), 210–246 (HVPRLIPLIASNCTSKSVAVRRRCYEFLDLLLQEWQT), and 251–288 (RHAAVLVESIKKGIRDADAEARVEARKAYWGLRAHFPG). Disordered stretches follow at residues 314–571 (SVAS…SSRL) and 614–634 (ANSDASSACSERSYSSRNGSI). Composition is skewed to low complexity over residues 317–337 (SLPQSDRSSSSSQESLNRPLS) and 347–358 (PAGSKSSGSPAS). Composition is skewed to polar residues over residues 406–421 (KQTLSTASSVGSSQVD) and 468–478 (TALSTLSTGAQ). The SXIP motif 1 signature appears at 490-493 (SRIP). Polar residues predominate over residues 496–518 (QGCSRDSSPTRLSVAPSNISHIY). The SXIP motif 2 motif lies at 527–530 (SRIP). The span at 616 to 630 (SDASSACSERSYSSR) shows a compositional bias: low complexity. Residues 638 to 889 (MRQTEDVAEV…TKLLQNHLRN (252 aa)) form a TOG 2 region. 2 HEAT repeats span residues 718 to 755 (RVFSMFLETLVDFIAVHKEDLQDWLFVLLTQLLKKMGA) and 780 to 817 (LQFTILMRFTVDQTQTPNLKVKVAILKYIETLTLQMEP). Polar residues predominate over residues 891 to 900 (GNTAQASIGS). Disordered regions lie at residues 891–936 (GNTA…FDYD) and 960–1047 (SVRS…DSGV). The span at 912 to 931 (SWSSPLTSPTNTSQNTPSPS) shows a compositional bias: low complexity. A compositionally biased stretch (basic and acidic residues) spans 963–977 (SQEDMTEPPRKREGD). Over residues 1019 to 1030 (SDSSFGSSSFNK) the composition is skewed to low complexity. Residues 1036-1046 (DQEESLTDDSG) are compositionally biased toward acidic residues. 4 HEAT repeats span residues 1047–1086 (VDQSEVVAELLKELSNHSERVEERKAALCELMRLIRETQL), 1091–1128 (EHFKTILLLLLETLGDGEHVIRALALRVLKEILNRQPW), 1167–1204 (ISPDQCIKVLCPIIQSADYPINLAAIKMLTKVIDRLPK), and 1209–1246 (QMLPEIVPGLIQGYDNSESSVRKACVFCLVAIYAVIGE).

It belongs to the CLASP family. As to quaternary structure, interacts with microtubules.

It is found in the cytoplasm. Its subcellular location is the cytoskeleton. The protein resides in the microtubule organizing center. The protein localises to the centrosome. It localises to the chromosome. It is found in the centromere. Its subcellular location is the kinetochore. The protein resides in the spindle. The protein localises to the golgi apparatus. It localises to the trans-Golgi network. It is found in the cell membrane. Its subcellular location is the cell projection. The protein resides in the ruffle membrane. In terms of biological role, microtubule plus-end tracking protein that promotes the stabilization of dynamic microtubules. Involved in the nucleation of noncentrosomal microtubules originating from the trans-Golgi network (TGN). Required for the polarization of the cytoplasmic microtubule arrays in migrating cells towards the leading edge of the cell. May act at the cell cortex to enhance the frequency of rescue of depolymerizing microtubules. This cortical microtubule stabilizing activity is regulated at least in part by phosphatidylinositol 3-kinase signaling. Also performs a similar stabilizing function at the kinetochore which is essential for the bipolar alignment of chromosomes on the mitotic spindle. The polypeptide is CLIP-associating protein 2 (clasp2) (Danio rerio (Zebrafish)).